The following is a 78-amino-acid chain: DNA-directed RNA polymerase subunit Rpo5 (78 aa).

It belongs to the archaeal Rpo5/eukaryotic RPB5 RNA polymerase subunit family. As to quaternary structure, part of the RNA polymerase complex.

Its subcellular location is the cytoplasm. It catalyses the reaction RNA(n) + a ribonucleoside 5'-triphosphate = RNA(n+1) + diphosphate. In terms of biological role, DNA-dependent RNA polymerase (RNAP) catalyzes the transcription of DNA into RNA using the four ribonucleoside triphosphates as substrates. The polypeptide is DNA-directed RNA polymerase subunit Rpo5 (Methanococcus maripaludis (strain C7 / ATCC BAA-1331)).